Reading from the N-terminus, the 481-residue chain is Argininosuccinate lyase (481 aa).

The protein belongs to the lyase 1 family. Argininosuccinate lyase subfamily.

The protein localises to the cytoplasm. It catalyses the reaction 2-(N(omega)-L-arginino)succinate = fumarate + L-arginine. The protein operates within amino-acid biosynthesis; L-arginine biosynthesis; L-arginine from L-ornithine and carbamoyl phosphate: step 3/3. In Methanococcus maripaludis (strain C7 / ATCC BAA-1331), this protein is Argininosuccinate lyase.